We begin with the raw amino-acid sequence, 191 residues long: Adenylate kinase (191 aa).

11-16 is an ATP binding site; it reads GSGKGT. Residues 31-60 form an NMP region; that stretch reads STGEILRREIKDKTELGKIAEEYINQGQLL. AMP-binding positions include T32, R37, 58–60, 86–89, and Q93; these read QLL and GFPR. Positions 127–137 are LID; it reads KRGKLFSRKDD. R128 is a binding site for ATP. The AMP site is built by R134 and R145. N173 is an ATP binding site.

The protein belongs to the adenylate kinase family. In terms of assembly, monomer.

Its subcellular location is the cytoplasm. It catalyses the reaction AMP + ATP = 2 ADP. The protein operates within purine metabolism; AMP biosynthesis via salvage pathway; AMP from ADP: step 1/1. In terms of biological role, catalyzes the reversible transfer of the terminal phosphate group between ATP and AMP. Plays an important role in cellular energy homeostasis and in adenine nucleotide metabolism. The chain is Adenylate kinase from Azobacteroides pseudotrichonymphae genomovar. CFP2.